Consider the following 379-residue polypeptide: uncharacterized protein (379 aa).

Disordered regions lie at residues 1–37, 130–150, and 332–379; these read MSSI…SGQT, VRYS…LSPE, and NPPI…RGSR.

The protein belongs to the chlamydial CPn_0499/CT_392/TC_0671 family.

This is an uncharacterized protein from Chlamydia muridarum (strain MoPn / Nigg).